Reading from the N-terminus, the 418-residue chain is cAMP-dependent protein kinase type II-beta regulatory subunit (418 aa).

Residues 2-153 form a dimerization and phosphorylation region; it reads SIEIPAGLTE…RLQEACKDIL (152 aa). Residues 45 to 57 show a composition bias toward basic and acidic residues; it reads RKGTARFGHEGRT. Positions 45–98 are disordered; it reads RKGTARFGHEGRTWGDAGAAGGGGTPSKGVNFAEEPRHSDSENGEEEEEEAADA. Threonine 69 bears the Phosphothreonine mark. Residues serine 83 and serine 85 each carry the phosphoserine modification. The span at 86 to 96 shows a compositional bias: acidic residues; that stretch reads ENGEEEEEEAA. Residue serine 114 is modified to Phosphoserine. 3',5'-cyclic AMP-binding positions include 154 to 275, glutamate 223, arginine 232, 276 to 418, glutamate 352, and arginine 361; these read LFKN…ESLP and FLKS…EPTA.

The protein belongs to the cAMP-dependent kinase regulatory chain family. As to quaternary structure, the inactive form of the enzyme is composed of two regulatory chains and two catalytic chains. Activation by cAMP produces two active catalytic monomers and a regulatory dimer that binds four cAMP molecules. Interacts with PRKACA and PRKACB. Interacts with the phosphorylated form of PJA2. Forms a complex composed of PRKAR2B, GSK3B and GSKIP through GSKIP interaction; facilitates PKA-induced phosphorylation and regulates GSK3B activity. Phosphorylated by the activated catalytic chain. In terms of tissue distribution, four types of regulatory chains are found: I-alpha, I-beta, II-alpha, and II-beta. Their expression varies among tissues and is in some cases constitutive and in others inducible.

It is found in the cytoplasm. Its subcellular location is the cell membrane. Regulatory subunit of the cAMP-dependent protein kinases involved in cAMP signaling in cells. Type II regulatory chains mediate membrane association by binding to anchoring proteins, including the MAP2 kinase. In Bos taurus (Bovine), this protein is cAMP-dependent protein kinase type II-beta regulatory subunit (PRKAR2B).